Consider the following 40-residue polypeptide: MADTTGRIPLWIIGTVAGILVIGLVGVFFYGSYSGLGSSL.

The chain crosses the membrane as a helical span at residues 8 to 28; it reads IPLWIIGTVAGILVIGLVGVF.

It belongs to the PsbJ family. PSII is composed of 1 copy each of membrane proteins PsbA, PsbB, PsbC, PsbD, PsbE, PsbF, PsbH, PsbI, PsbJ, PsbK, PsbL, PsbM, PsbT, PsbX, PsbY, PsbZ, Psb30/Ycf12, at least 3 peripheral proteins of the oxygen-evolving complex and a large number of cofactors. It forms dimeric complexes.

The protein resides in the plastid. It is found in the chloroplast thylakoid membrane. One of the components of the core complex of photosystem II (PSII). PSII is a light-driven water:plastoquinone oxidoreductase that uses light energy to abstract electrons from H(2)O, generating O(2) and a proton gradient subsequently used for ATP formation. It consists of a core antenna complex that captures photons, and an electron transfer chain that converts photonic excitation into a charge separation. The protein is Photosystem II reaction center protein J of Helianthus annuus (Common sunflower).